The primary structure comprises 212 residues: Large ribosomal subunit protein uL3 (212 aa).

Residues 135-155 (ATHGNSVSHRAHGSTGQNQSP) are compositionally biased toward polar residues. Residues 135–162 (ATHGNSVSHRAHGSTGQNQSPGKVFKGK) are disordered. At glutamine 153 the chain carries N5-methylglutamine.

This sequence belongs to the universal ribosomal protein uL3 family. In terms of assembly, part of the 50S ribosomal subunit. Forms a cluster with proteins L14 and L19. Methylated by PrmB.

In terms of biological role, one of the primary rRNA binding proteins, it binds directly near the 3'-end of the 23S rRNA, where it nucleates assembly of the 50S subunit. In Psychrobacter arcticus (strain DSM 17307 / VKM B-2377 / 273-4), this protein is Large ribosomal subunit protein uL3.